Reading from the N-terminus, the 1146-residue chain is MTTVIDATMAYRFLEEATDSSSSSSSSKLESSPVDAVLFVGMSLVLGIASRHLLRGTRVPYTVALLVIGIALGSLEYGAKHNLGKIGHGIRIWNEIDPELLLAVFLPALLFESSFSMEVHQIKRCLGQMVLLAVPGVLISTACLGSLVKVTFPYEWDWKTSLLLGGLLSATDPVAVVALLKELGASKKLSTIIEGESLMNDGTAIVVFQLFLKMAMGQNSDWSSIIKFLLKVALGAVGIGLAFGIASVIWLKFIFNDTVIEITLTIAVSYFAYYTAQEWAGASGVLTVMTLGMFYAAFARTAFKGDSQKSLHHFWEMVAYIANTLIFILSGVVIAEGILDSDKIAYQGNSWRFLFLLYVYIQLSRVVVVGVLYPLLCRFGYGLDWKESIILVWSGLRGAVALALSLSVKQSSGNSHISKETGTLFLFFTGGIVFLTLIVNGSTTQFVLRLLRMDILPAPKKRILEYTKYEMLNKALRAFQDLGDDEELGPADWPTVESYISSLKGSEGELVHHPHNGSKIGSLDPKSLKDIRMRFLNGVQATYWEMLDEGRISEVTANILMQSVDEALDQVSTTLCDWRGLKPHVNFPNYYNFLHSKVVPRKLVTYFAVERLESACYISAAFLRAHTIARQQLYDFLGESNIGSIVINESEKEGEEAKKFLEKVRSSFPQVLRVVKTKQVTYSVLNHLLGYIENLEKVGLLEEKEIAHLHDAVQTGLKKLLRNPPIVKLPKLSDMITSHPLSVALPPAFCEPLKHSKKEPMKLRGVTLYKEGSKPTGVWLIFDGIVKWKSKILSNNHSLHPTFSHGSTLGLYEVLTGKPYLCDLITDSMVLCFFIDSEKILSLQSDSTIDDFLWQESALVLLKLLRPQIFESVAMQELRALVSTESSKLTTYVTGESIEIDCNSIGLLLEGFVKPVGIKEELISSPAALSPSNGNQSFHNSSEASGIMRVSFSQQATQYIVETRARAIIFNIGAFGADRTLHRRPSSLTPPRSSSSDQLQRSFRKEHRGLMSWPENIYAKQQQEINKTTLSLSERAMQLSIFGSMVNVYRRSVSFGGIYNNKLQDNLLYKKLPLNPAQGLVSAKSESSIVTKKQLETRKHACQLPLKGESSTRQNTMVESSDEEDEDEGIVVRIDSPSKIVFRNDL.

Over 1 to 28 the chain is Extracellular; sequence MTTVIDATMAYRFLEEATDSSSSSSSSK. A helical membrane pass occupies residues 29–49; it reads LESSPVDAVLFVGMSLVLGIA. At 50-58 the chain is on the cytoplasmic side; that stretch reads SRHLLRGTR. A helical membrane pass occupies residues 59-79; it reads VPYTVALLVIGIALGSLEYGA. The Extracellular portion of the chain corresponds to 80 to 99; it reads KHNLGKIGHGIRIWNEIDPE. Residues 100–120 traverse the membrane as a helical segment; that stretch reads LLLAVFLPALLFESSFSMEVH. The Cytoplasmic segment spans residues 121–127; it reads QIKRCLG. A helical membrane pass occupies residues 128-148; it reads QMVLLAVPGVLISTACLGSLV. The Extracellular portion of the chain corresponds to 149-159; sequence KVTFPYEWDWK. The helical transmembrane segment at 160 to 180 threads the bilayer; sequence TSLLLGGLLSATDPVAVVALL. The Cytoplasmic segment spans residues 181-191; the sequence is KELGASKKLST. A helical transmembrane segment spans residues 192 to 212; it reads IIEGESLMNDGTAIVVFQLFL. Residues 213 to 227 lie on the Extracellular side of the membrane; sequence KMAMGQNSDWSSIIK. The helical transmembrane segment at 228–250 threads the bilayer; it reads FLLKVALGAVGIGLAFGIASVIW. Over 251 to 253 the chain is Cytoplasmic; the sequence is LKF. Residues 254–273 traverse the membrane as a helical segment; that stretch reads IFNDTVIEITLTIAVSYFAY. At 274 to 278 the chain is on the extracellular side; it reads YTAQE. Residues 279–299 traverse the membrane as a helical segment; the sequence is WAGASGVLTVMTLGMFYAAFA. The Cytoplasmic portion of the chain corresponds to 300–313; that stretch reads RTAFKGDSQKSLHH. The chain crosses the membrane as a helical span at residues 314 to 334; that stretch reads FWEMVAYIANTLIFILSGVVI. Topologically, residues 335–352 are extracellular; that stretch reads AEGILDSDKIAYQGNSWR. Residues 353–373 traverse the membrane as a helical segment; the sequence is FLFLLYVYIQLSRVVVVGVLY. Residues 374–387 lie on the Cytoplasmic side of the membrane; the sequence is PLLCRFGYGLDWKE. A helical transmembrane segment spans residues 388 to 408; that stretch reads SIILVWSGLRGAVALALSLSV. The Extracellular portion of the chain corresponds to 409–420; the sequence is KQSSGNSHISKE. The chain crosses the membrane as a helical span at residues 421 to 441; the sequence is TGTLFLFFTGGIVFLTLIVNG. Topologically, residues 442–1146 are cytoplasmic; it reads STTQFVLRLL…PSKIVFRNDL (705 aa). 2 disordered regions span residues 981-1001 and 1102-1128; these read LHRRPSSLTPPRSSSSDQLQR and CQLPLKGESSTRQNTMVESSDEEDEDE. Positions 986 to 996 are enriched in low complexity; that stretch reads SSLTPPRSSSS. Residues 1109-1118 are compositionally biased toward polar residues; the sequence is ESSTRQNTMV.

It belongs to the monovalent cation:proton antiporter 1 (CPA1) transporter (TC 2.A.36) family. As to quaternary structure, interacts with CIPK24/SOS2 and CBL4/SOS3. Phosphorylated by CIPK24/SOS2 in complex with CBL4/SOS3. In terms of tissue distribution, more expressed in roots than in shoots. Mostly localized in parenchyma cells at the xylem/symplast boundary in roots, hypocotyls, stems and leaves. Also present in root tips epidermal cells.

The protein resides in the cell membrane. The enzyme catalyses Na(+)(in) + H(+)(out) = Na(+)(out) + H(+)(in). The catalysed reaction is K(+)(in) + H(+)(out) = K(+)(out) + H(+)(in). Acts in electroneutral exchange of protons for cations such as Na(+) or Li(+) across plasma membrane. Involved in Na(+) and K(+) homeostasis. Required for cytoplasmic Na(+) and Li(+) detoxification by secreting them from the cytoplasm to the extracellular space. Regulates Na(+) content of the xylem sap. In Arabidopsis thaliana (Mouse-ear cress), this protein is Sodium/hydrogen exchanger 7 (NHX7).